The primary structure comprises 81 residues: Insect-toxin Cn10 (81 aa).

Residues 1–13 (ITACLVLIGTVCA) form the signal peptide. Positions 14 to 79 (KEGYLVNKST…TYPIPGKTCR (66 aa)) constitute an LCN-type CS-alpha/beta domain. Disulfide bonds link Cys25–Cys78, Cys29–Cys54, Cys38–Cys59, and Cys42–Cys61. Residue Lys81 is a propeptide, removed by a carboxypeptidase.

The protein belongs to the long (4 C-C) scorpion toxin superfamily. Sodium channel inhibitor family. Beta subfamily. As to expression, expressed by the venom gland.

The protein localises to the secreted. In terms of biological role, beta toxins bind voltage-independently at site-4 of sodium channels (Nav) and shift the voltage of activation toward more negative potentials thereby affecting sodium channel activation and promoting spontaneous and repetitive firing. Is toxic on insects and crustaceans, but not on mammals. The chain is Insect-toxin Cn10 from Centruroides noxius (Mexican scorpion).